The primary structure comprises 227 residues: MRIIVSIGGSVLAPDLEAGRVEAHADAIDSLVADGHEVAAVVGGGDVARQYIDSARDLGATEYDLDALGIDVTRLNARLLVTALNSSAIPEPAESHEDARASMRRGEVAVMGGTVPGHTTDAVAAMLAEMVEADLLIYATSVPGVFSADPNEDPSAERFDRLEASKLVDVISSIETTAGSNAPVDLLAAKVIERSGLRAIVLDGTAPERIADAVDGDPVGTEVLPNE.

9 to 10 provides a ligand contact to ATP; that stretch reads GS. Gly-44 contacts UMP. Residues Gly-45 and Arg-49 each contribute to the ATP site. Residues Asp-66 and 114–120 each bind UMP; that span reads TVPGHTT. ATP-binding residues include Thr-140, Phe-146, and Asp-149.

It belongs to the UMP kinase family. As to quaternary structure, homohexamer.

The protein resides in the cytoplasm. It carries out the reaction UMP + ATP = UDP + ADP. The protein operates within pyrimidine metabolism; CTP biosynthesis via de novo pathway; UDP from UMP (UMPK route): step 1/1. Its activity is regulated as follows. Inhibited by UTP. Functionally, catalyzes the reversible phosphorylation of UMP to UDP. This chain is Uridylate kinase, found in Natronomonas pharaonis (strain ATCC 35678 / DSM 2160 / CIP 103997 / JCM 8858 / NBRC 14720 / NCIMB 2260 / Gabara) (Halobacterium pharaonis).